The chain runs to 242 residues: Probable septum site-determining protein MinC (242 aa).

It belongs to the MinC family. As to quaternary structure, interacts with MinD and FtsZ.

Its function is as follows. Cell division inhibitor that blocks the formation of polar Z ring septums. Rapidly oscillates between the poles of the cell to destabilize FtsZ filaments that have formed before they mature into polar Z rings. Prevents FtsZ polymerization. The chain is Probable septum site-determining protein MinC from Buchnera aphidicola subsp. Schizaphis graminum (strain Sg).